The chain runs to 391 residues: F-box/kelch-repeat protein At3g16740 (391 aa).

Residues 1–47 (MVQISDLPRDLTEEVLSRIPVTSMRAVRFTCKKWNTLSKDRSFTKKH) form the F-box domain. Kelch repeat units follow at residues 104–154 (KIFH…YEEK) and 163–215 (ILRF…LKGN).

Part of a SCF (ASK-cullin-F-box) protein ligase complex. Interacts with ASK11.

It localises to the nucleus. It participates in protein modification; protein ubiquitination. Functionally, component of SCF(ASK-cullin-F-box) E3 ubiquitin ligase complexes, which may mediate the ubiquitination and subsequent proteasomal degradation of target proteins. The sequence is that of F-box/kelch-repeat protein At3g16740 from Arabidopsis thaliana (Mouse-ear cress).